Reading from the N-terminus, the 339-residue chain is Serine/threonine-protein kinase SRK2J (339 aa).

One can recognise a Protein kinase domain in the interval 4–260 (YEMVKDLGFG…LKEIKSHAWF (257 aa)). ATP-binding positions include 10–18 (LGFGNFGLA) and Lys33. Asp123 acts as the Proton acceptor in catalysis. A disordered region spans residues 308-339 (SRPVESLGSDKKDDDEEEYLDANDEEWYDDYA). Residues 320 to 339 (DDDEEEYLDANDEEWYDDYA) are compositionally biased toward acidic residues.

Belongs to the protein kinase superfamily. Ser/Thr protein kinase family. Expressed in seedlings.

The enzyme catalyses L-seryl-[protein] + ATP = O-phospho-L-seryl-[protein] + ADP + H(+). It catalyses the reaction L-threonyl-[protein] + ATP = O-phospho-L-threonyl-[protein] + ADP + H(+). The chain is Serine/threonine-protein kinase SRK2J (SRK2J) from Arabidopsis thaliana (Mouse-ear cress).